The chain runs to 313 residues: Ribosomal RNA small subunit methyltransferase H (313 aa).

S-adenosyl-L-methionine contacts are provided by residues 35–37 (GGH), Asp55, Phe79, Asp101, and Gln108.

Belongs to the methyltransferase superfamily. RsmH family.

Its subcellular location is the cytoplasm. The catalysed reaction is cytidine(1402) in 16S rRNA + S-adenosyl-L-methionine = N(4)-methylcytidine(1402) in 16S rRNA + S-adenosyl-L-homocysteine + H(+). In terms of biological role, specifically methylates the N4 position of cytidine in position 1402 (C1402) of 16S rRNA. The sequence is that of Ribosomal RNA small subunit methyltransferase H from Edwardsiella ictaluri (strain 93-146).